A 366-amino-acid polypeptide reads, in one-letter code: Heat-inducible transcription repressor HrcA (366 aa).

Residues 298–309 (SSGYGQSSTPSA) are compositionally biased toward polar residues. Residues 298 to 318 (SSGYGQSSTPSANVEHEEYDT) form a disordered region.

The protein belongs to the HrcA family.

Functionally, negative regulator of class I heat shock genes (grpE-dnaK-dnaJ and groELS operons). Prevents heat-shock induction of these operons. This chain is Heat-inducible transcription repressor HrcA, found in Bifidobacterium animalis subsp. lactis (strain AD011).